Here is a 238-residue protein sequence, read N- to C-terminus: MSAPKYKRILLKLSGEALMGSDAYGINPQTIAAICGEIKAVADMGVEIGVVIGGGNIFRGMAGTATGMDRATADYMGMLATVMNAMALSDAFRQCGLNARVQSALNIEQVVEPYIRGKAIRYLEEGKIVIFGAGTGNPFFTTDTAAALRGSEIGAEIVLKATKVDGIYSADPKKDPSATRYDKISFNEAISKNLAVMDATAFALCRDQKLPINVFSIFKTGALKRVVCGEDEGTLVYC.

Position 12–15 (Lys12–Gly15) interacts with ATP. Gly54 contacts UMP. Residues Gly55 and Arg59 each coordinate ATP. UMP-binding positions include Asp74 and Thr135 to Thr142. The ATP site is built by Thr162, Tyr168, and Asp171.

The protein belongs to the UMP kinase family. Homohexamer.

The protein localises to the cytoplasm. The catalysed reaction is UMP + ATP = UDP + ADP. The protein operates within pyrimidine metabolism; CTP biosynthesis via de novo pathway; UDP from UMP (UMPK route): step 1/1. Its activity is regulated as follows. Inhibited by UTP. Its function is as follows. Catalyzes the reversible phosphorylation of UMP to UDP. The chain is Uridylate kinase from Dechloromonas aromatica (strain RCB).